The sequence spans 29 residues: HSQGTFTSDYSKYLDSRRAQDFVQWLMNT.

The residue at position 2 (Ser2) is a Phosphoserine.

This sequence belongs to the glucagon family.

It localises to the secreted. Its function is as follows. Glucagon plays a key role in glucose metabolism and homeostasis. Regulates blood glucose by increasing gluconeogenesis and decreasing glycolysis. The protein is Glucagon (GCG) of Oryctolagus cuniculus (Rabbit).